The chain runs to 487 residues: GTPase Der (487 aa).

EngA-type G domains lie at 2–164 (KTIA…SLAK) and 203–374 (IAVG…QRFA). GTP is bound by residues 8-15 (GKPNVGKS), 55-59 (DTGGI), 116-119 (NKVD), 209-216 (GRVNVGKS), 256-260 (DTAGI), and 320-323 (NKWD). One can recognise a KH-like domain in the interval 375–459 (YRIPTSALND…PILLSVKGKN (85 aa)). Over residues 459–480 (NAKDEENTSAKKESPSKVSHRE) the composition is skewed to basic and acidic residues. The disordered stretch occupies residues 459–487 (NAKDEENTSAKKESPSKVSHRESKNRRFV).

The protein belongs to the TRAFAC class TrmE-Era-EngA-EngB-Septin-like GTPase superfamily. EngA (Der) GTPase family. Associates with the 50S ribosomal subunit.

Functionally, GTPase that plays an essential role in the late steps of ribosome biogenesis. This chain is GTPase Der, found in Helicobacter hepaticus (strain ATCC 51449 / 3B1).